The primary structure comprises 206 residues: Small ribosomal subunit protein uS4 (206 aa).

An S4 RNA-binding domain is found at 96–156 (SRLDNVVYRM…EKSKNQLRIQ (61 aa)).

The protein belongs to the universal ribosomal protein uS4 family. In terms of assembly, part of the 30S ribosomal subunit. Contacts protein S5. The interaction surface between S4 and S5 is involved in control of translational fidelity.

Its function is as follows. One of the primary rRNA binding proteins, it binds directly to 16S rRNA where it nucleates assembly of the body of the 30S subunit. Functionally, with S5 and S12 plays an important role in translational accuracy. The protein is Small ribosomal subunit protein uS4 of Teredinibacter turnerae (strain ATCC 39867 / T7901).